A 104-amino-acid chain; its full sequence is Flagellar hook-basal body complex protein FliE (104 aa).

This sequence belongs to the FliE family.

The protein localises to the bacterial flagellum basal body. The sequence is that of Flagellar hook-basal body complex protein FliE from Escherichia coli O6:K15:H31 (strain 536 / UPEC).